Here is a 244-residue protein sequence, read N- to C-terminus: uncharacterized protein (244 aa).

Residues 1–127 form a disordered region; sequence MSGPQGSDPR…YPGQYGPYGQ (127 aa). Polar residues predominate over residues 34–43; the sequence is WQQQPTQEAT. Composition is skewed to low complexity over residues 45–75 and 88–127; these read QAPA…YAQP and PGQY…PYGQ. A helical transmembrane segment spans residues 136-156; the sequence is VAVIGGVIAVMAVLFIGAVLI.

It localises to the membrane. This is an uncharacterized protein from Mycobacterium tuberculosis (strain CDC 1551 / Oshkosh).